The primary structure comprises 144 residues: Transmembrane protein 170A (144 aa).

Topologically, residues Met-1–Val-50 are lumenal. Residues Asn-30 and Asn-36 are each glycosylated (N-linked (GlcNAc...) asparagine). A helical membrane pass occupies residues Phe-51–Phe-71. Residues Thr-72–Ser-85 lie on the Cytoplasmic side of the membrane. The helical transmembrane segment at Ile-86–Ala-106 threads the bilayer. The Lumenal segment spans residues Gly-107–Met-116. A helical membrane pass occupies residues Ile-117–Phe-137. Residues Leu-138–Leu-144 are Cytoplasmic-facing.

This sequence belongs to the TMEM170 family. In terms of assembly, interacts with RTN4.

It is found in the endoplasmic reticulum membrane. It localises to the nucleus envelope. Its function is as follows. Acts as a regulator of endoplasmic reticulum (ER) and nuclear envelope (NE) morphogenesis. Affects the ratio between tubular ER and ER sheets by promoting sheet formation at the expense of tubules. Influences NE expansion, nuclear pore complex formation and proper localization of inner nuclear membrane proteins. The protein is Transmembrane protein 170A (TMEM170A) of Homo sapiens (Human).